The primary structure comprises 345 residues: Fructose-bisphosphate aldolase (345 aa).

Residue Ser53 coordinates D-glyceraldehyde 3-phosphate. Asp95 functions as the Proton donor in the catalytic mechanism. His96, Asp131, Glu161, and His212 together coordinate Zn(2+). Gly213 contributes to the dihydroxyacetone phosphate binding site. Residue His252 coordinates Zn(2+). Residues 253 to 255 (GGS) and 274 to 277 (NVDT) each bind dihydroxyacetone phosphate.

It belongs to the class II fructose-bisphosphate aldolase family. Zn(2+) is required as a cofactor.

The catalysed reaction is beta-D-fructose 1,6-bisphosphate = D-glyceraldehyde 3-phosphate + dihydroxyacetone phosphate. It participates in carbohydrate degradation; glycolysis; D-glyceraldehyde 3-phosphate and glycerone phosphate from D-glucose: step 4/4. Functionally, catalyzes the aldol condensation of dihydroxyacetone phosphate (DHAP or glycerone-phosphate) with glyceraldehyde 3-phosphate (G3P) to form fructose 1,6-bisphosphate (FBP) in gluconeogenesis and the reverse reaction in glycolysis. This is Fructose-bisphosphate aldolase (fba) from Mycobacterium leprae (strain TN).